Here is a 202-residue protein sequence, read N- to C-terminus: Glycolipid transfer protein 1 (202 aa).

A ganglioside GM3 (d18:1(4E)) is bound by residues Asp-52, Asn-56, Trp-99, and His-138.

It belongs to the GLTP family.

Its function is as follows. May be involved in glycolipids transfer. The polypeptide is Glycolipid transfer protein 1 (Arabidopsis thaliana (Mouse-ear cress)).